The following is a 377-amino-acid chain: Guanine nucleotide exchange factor for Rab-3A (377 aa).

The disordered stretch occupies residues 23-57; sequence WKNLGPSKGNRKSPGGLVEASASWEEAGGEEHPAA. Residues 77–128 are a coiled coil; the sequence is SEFLKEELYKAQKELKLKDEECERLCKVRAQLEQELEELTASLFEEAHKMVR. The tract at residues 167–198 is disordered; that stretch reads PASPNRELHPQLLSPTKAGPRKGHSRQKSTSS. A phosphoserine mark is found at Ser-169 and Ser-180.

The protein belongs to the SEC2 family. As to quaternary structure, interacts with RAB3A and IHPK1 through the coiled-coil domain. This interaction is competitive. IHPK1 kinase activity is not required for this interaction. Selectively localized to the brain (at protein level).

Guanine nucleotide exchange factor (GEF) which may activate RAB3A, a GTPase that regulates synaptic vesicle exocytosis. Promotes the exchange of GDP to GTP, converting inactive GDP-bound Rab proteins into their active GTP-bound form. May also activate RAB8A and RAB8B. The polypeptide is Guanine nucleotide exchange factor for Rab-3A (Rab3il1) (Rattus norvegicus (Rat)).